Reading from the N-terminus, the 256-residue chain is Small ribosomal subunit protein eS1 (256 aa).

Ala-2 bears the N-acetylalanine; partial mark.

This sequence belongs to the eukaryotic ribosomal protein eS1 family. Component of the small ribosomal subunit. Mature ribosomes consist of a small (40S) and a large (60S) subunit. The 40S subunit contains about 33 different proteins and 1 molecule of RNA (18S). The 60S subunit contains about 49 different proteins and 3 molecules of RNA (25S, 5.8S and 5S).

The protein resides in the cytoplasm. The sequence is that of Small ribosomal subunit protein eS1 (rps1) from Sclerotinia sclerotiorum (strain ATCC 18683 / 1980 / Ss-1) (White mold).